Consider the following 31-residue polypeptide: Dermaseptin-7.2TR (31 aa).

Residue E31 is modified to Glutamic acid 1-amide.

Expressed by the skin glands.

The protein resides in the secreted. Has antimicrobial activity. In Phyllomedusa trinitatis (Trinidad leaf frog), this protein is Dermaseptin-7.2TR.